Reading from the N-terminus, the 512-residue chain is Maturase K (512 aa).

It belongs to the intron maturase 2 family. MatK subfamily.

The protein localises to the plastid. It localises to the chloroplast. Its function is as follows. Usually encoded in the trnK tRNA gene intron. Probably assists in splicing its own and other chloroplast group II introns. This Lemna minor (Common duckweed) protein is Maturase K.